The sequence spans 324 residues: Phospho-N-acetylmuramoyl-pentapeptide-transferase (324 aa).

The next 10 helical transmembrane spans lie at 9–29, 53–73, 77–97, 117–137, 149–169, 176–196, 201–221, 227–247, 253–273, and 304–324; these read TFAV…PFLV, TMGA…FSFI, VSAA…LGFL, FLGQ…SDFA, IDLG…FSNA, LDGL…VIAF, MDVA…LLFN, IFMG…VSIL, LLLL…LQVF, and VLTF…VVIF.

The protein belongs to the glycosyltransferase 4 family. MraY subfamily. Mg(2+) is required as a cofactor.

It localises to the cell membrane. It carries out the reaction UDP-N-acetyl-alpha-D-muramoyl-L-alanyl-gamma-D-glutamyl-meso-2,6-diaminopimeloyl-D-alanyl-D-alanine + di-trans,octa-cis-undecaprenyl phosphate = di-trans,octa-cis-undecaprenyl diphospho-N-acetyl-alpha-D-muramoyl-L-alanyl-D-glutamyl-meso-2,6-diaminopimeloyl-D-alanyl-D-alanine + UMP. It functions in the pathway cell wall biogenesis; peptidoglycan biosynthesis. Functionally, catalyzes the initial step of the lipid cycle reactions in the biosynthesis of the cell wall peptidoglycan: transfers peptidoglycan precursor phospho-MurNAc-pentapeptide from UDP-MurNAc-pentapeptide onto the lipid carrier undecaprenyl phosphate, yielding undecaprenyl-pyrophosphoryl-MurNAc-pentapeptide, known as lipid I. The protein is Phospho-N-acetylmuramoyl-pentapeptide-transferase of Listeria innocua serovar 6a (strain ATCC BAA-680 / CLIP 11262).